The sequence spans 522 residues: 2-isopropylmalate synthase (522 aa).

Positions 5–267 (VIIFDTTLRD…ETGINAKEIH (263 aa)) constitute a Pyruvate carboxyltransferase domain. The Mn(2+) site is built by D14, H202, H204, and N238. Residues 392–522 (QLQQLVVQSD…MQKNRELGGV (131 aa)) form a regulatory domain region.

Belongs to the alpha-IPM synthase/homocitrate synthase family. LeuA type 1 subfamily. Homodimer. Mn(2+) is required as a cofactor.

The protein localises to the cytoplasm. The catalysed reaction is 3-methyl-2-oxobutanoate + acetyl-CoA + H2O = (2S)-2-isopropylmalate + CoA + H(+). It functions in the pathway amino-acid biosynthesis; L-leucine biosynthesis; L-leucine from 3-methyl-2-oxobutanoate: step 1/4. Its function is as follows. Catalyzes the condensation of the acetyl group of acetyl-CoA with 3-methyl-2-oxobutanoate (2-ketoisovalerate) to form 3-carboxy-3-hydroxy-4-methylpentanoate (2-isopropylmalate). The polypeptide is 2-isopropylmalate synthase (Shewanella putrefaciens (strain CN-32 / ATCC BAA-453)).